The following is a 101-amino-acid chain: Putative metal transport protein HQ_3622A (101 aa).

An N-terminal signal peptide occupies residues 1 to 32 (MKIISMSMDSWIQRAALMLLGLVIVAPFFGWT). Residues 75–95 (IGTLISAGVGTVLTLIVAFGA) traverse the membrane as a helical segment.

The protein localises to the cell membrane. May be involved in metal transport. This is Putative metal transport protein HQ_3622A from Haloquadratum walsbyi (strain DSM 16790 / HBSQ001).